The primary structure comprises 236 residues: Probable ascorbate-specific transmembrane electron transporter 2 (236 aa).

At 1–11 (MAAGLGVKAAP) the chain is on the cytoplasmic side. A helical membrane pass occupies residues 12–32 (FTYVAHALAVAAAVMVLVWCI). The region spanning 15–219 (VAHALAVAAA…FGAAVVVAAV (205 aa)) is the Cytochrome b561 domain. The Extracellular portion of the chain corresponds to 33 to 53 (SFRGGLAFEADNKNLIFNVHP). H52 provides a ligand contact to heme b. The chain crosses the membrane as a helical span at residues 54-74 (VLMLIGYIILGSEAIMIYKIF). L-ascorbate is bound at residue 67–75 (AIMIYKIFP). Residues 75 to 84 (PKLNHDTTKL) lie on the Cytoplasmic side of the membrane. The helical transmembrane segment at 85 to 105 (IHLILHAIAIVLGAVGIYCAF) threads the bilayer. Heme b is bound by residues H86 and H120. At 106–122 (KFHNESGIANLYSLHSW) the chain is on the extracellular side. A monodehydro-L-ascorbate radical-binding site is contributed by 116 to 125 (LYSLHSWLGI). The chain crosses the membrane as a helical span at residues 123-143 (LGIGTISLYGIQWIFGFVAFF). Residues 144–153 (YPGAAPHVRR) are Cytoplasmic-facing. Residues 154-174 (GALPWHVLFGLFVYVLTLATA) form a helical membrane-spanning segment. Heme b is bound at residue H159. Over 175–196 (ELGLLEKLTFLQSSGLDKYGAE) the chain is Extracellular. The helical transmembrane segment at 197-217 (AFLVNFTGLVVALFGAAVVVA) threads the bilayer. The Cytoplasmic segment spans residues 218 to 236 (AVAPAHVEEPEGYAPIPVN).

Heme b is required as a cofactor.

Its subcellular location is the membrane. In terms of biological role, two-heme-containing cytochrome. Catalyzes ascorbate-dependent trans-membrane electron transfer by utilizing a concerted H(+)/e(-) transfer mechanism. The polypeptide is Probable ascorbate-specific transmembrane electron transporter 2 (Oryza sativa subsp. japonica (Rice)).